The chain runs to 469 residues: Sulfate adenylyltransferase subunit 1 (469 aa).

The 215-residue stretch at 22 to 236 folds into the tr-type G domain; sequence KDMLRFLTCG…TLENIEIGND (215 aa). Residues 31-38 form a G1 region; it reads GSVDDGKS. Residue 31-38 coordinates GTP; that stretch reads GSVDDGKS. Positions 89–93 are G2; sequence GITID. A G3 region spans residues 110-113; sequence DTPG. GTP-binding positions include 110-114 and 165-168; these read DTPGH and NKMD. Residues 165-168 are G4; that stretch reads NKMD. The segment at 202 to 204 is G5; it reads SAL.

Belongs to the TRAFAC class translation factor GTPase superfamily. Classic translation factor GTPase family. CysN/NodQ subfamily. As to quaternary structure, heterodimer composed of CysD, the smaller subunit, and CysN.

It carries out the reaction sulfate + ATP + H(+) = adenosine 5'-phosphosulfate + diphosphate. It participates in sulfur metabolism; hydrogen sulfide biosynthesis; sulfite from sulfate: step 1/3. Functionally, with CysD forms the ATP sulfurylase (ATPS) that catalyzes the adenylation of sulfate producing adenosine 5'-phosphosulfate (APS) and diphosphate, the first enzymatic step in sulfur assimilation pathway. APS synthesis involves the formation of a high-energy phosphoric-sulfuric acid anhydride bond driven by GTP hydrolysis by CysN coupled to ATP hydrolysis by CysD. The polypeptide is Sulfate adenylyltransferase subunit 1 (Pseudoalteromonas atlantica (strain T6c / ATCC BAA-1087)).